Reading from the N-terminus, the 358-residue chain is UDP-N-acetylglucosamine--N-acetylmuramyl-(pentapeptide) pyrophosphoryl-undecaprenol N-acetylglucosamine transferase (358 aa).

Residues 11 to 13 (TGG), asparagine 122, arginine 161, serine 189, isoleucine 243, 262 to 267 (ALTVCE), and glutamine 288 each bind UDP-N-acetyl-alpha-D-glucosamine.

Belongs to the glycosyltransferase 28 family. MurG subfamily.

The protein resides in the cell inner membrane. The catalysed reaction is di-trans,octa-cis-undecaprenyl diphospho-N-acetyl-alpha-D-muramoyl-L-alanyl-D-glutamyl-meso-2,6-diaminopimeloyl-D-alanyl-D-alanine + UDP-N-acetyl-alpha-D-glucosamine = di-trans,octa-cis-undecaprenyl diphospho-[N-acetyl-alpha-D-glucosaminyl-(1-&gt;4)]-N-acetyl-alpha-D-muramoyl-L-alanyl-D-glutamyl-meso-2,6-diaminopimeloyl-D-alanyl-D-alanine + UDP + H(+). It functions in the pathway cell wall biogenesis; peptidoglycan biosynthesis. Its function is as follows. Cell wall formation. Catalyzes the transfer of a GlcNAc subunit on undecaprenyl-pyrophosphoryl-MurNAc-pentapeptide (lipid intermediate I) to form undecaprenyl-pyrophosphoryl-MurNAc-(pentapeptide)GlcNAc (lipid intermediate II). The chain is UDP-N-acetylglucosamine--N-acetylmuramyl-(pentapeptide) pyrophosphoryl-undecaprenol N-acetylglucosamine transferase from Coxiella burnetii (strain Dugway 5J108-111).